We begin with the raw amino-acid sequence, 2034 residues long: Sperm vesicle fusion protein fer-1 (2034 aa).

Residues 1–80 are disordered; that stretch reads MTVKEKLLKV…GGSDIELLPD (80 aa). Residues 1–1998 are Cytoplasmic-facing; the sequence is MTVKEKLLKV…CIKYFWHYYG (1998 aa). Acidic residues predominate over residues 66–79; that stretch reads ELSDDGGSDIELLP. 4 consecutive C2 domains span residues 229–367, 954–1082, 1120–1246, and 1363–1484; these read RIDE…YLPT, DSED…PQWF, YKER…KSDH, and KKGK…ATGG. The segment at 1563–1619 is disordered; it reads QKAGKENFSDGSDQQNEDVSDGSWDEEDLEREKEKLKWEKHRSKGKPLKKVTTEKAE. The span at 1577–1591 shows a compositional bias: acidic residues; sequence QNEDVSDGSWDEEDL. Positions 1600-1611 are enriched in basic residues; it reads WEKHRSKGKPLK. The region spanning 1684–1831 is the C2 5 domain; that stretch reads EYGAIPAPFN…EGIGSPSDVG (148 aa). Residues 1953-1972 form a disordered region; the sequence is QEPAGKKRSEPNHSPFLEKP. The chain crosses the membrane as a helical span at residues 1999-2019; it reads LQILLWLIIIVILILTIFVLL. Residues 2020-2034 lie on the Extracellular side of the membrane; it reads HTWPTILAEIIKAIF.

This sequence belongs to the ferlin family. In terms of tissue distribution, exclusively expressed in the testis.

The protein resides in the membrane. Functionally, required for the fusion of the membranous organelles (MOs) with the plasma membrane, a process essential in spermiogenesis. This Caenorhabditis elegans protein is Sperm vesicle fusion protein fer-1 (fer-1).